The primary structure comprises 523 residues: uncharacterized protein (523 aa).

The N-terminal 63 residues, 1-63, are a transit peptide targeting the chloroplast; that stretch reads MACVSTCLIL…NRHGIAVVKA (63 aa). The next 3 membrane-spanning stretches (helical) occupy residues 180–200, 386–406, and 423–443; these read VSFGTALIASIVIVYTSIIAL, ALVIGLGAVNLFGVIVLNTLL, and IYPLLQIYAGSFFTIPLIRWF.

Its subcellular location is the plastid. The protein resides in the chloroplast membrane. This is an uncharacterized protein from Arabidopsis thaliana (Mouse-ear cress).